Here is a 193-residue protein sequence, read N- to C-terminus: Holliday junction branch migration complex subunit RuvA (193 aa).

The interval Met1–Lys63 is domain I. The interval Asp64–Lys141 is domain II. The interval Lys141 to Glu142 is flexible linker. The segment at Val143–Ser193 is domain III.

This sequence belongs to the RuvA family. Homotetramer. Forms an RuvA(8)-RuvB(12)-Holliday junction (HJ) complex. HJ DNA is sandwiched between 2 RuvA tetramers; dsDNA enters through RuvA and exits via RuvB. An RuvB hexamer assembles on each DNA strand where it exits the tetramer. Each RuvB hexamer is contacted by two RuvA subunits (via domain III) on 2 adjacent RuvB subunits; this complex drives branch migration. In the full resolvosome a probable DNA-RuvA(4)-RuvB(12)-RuvC(2) complex forms which resolves the HJ.

The protein localises to the cytoplasm. In terms of biological role, the RuvA-RuvB-RuvC complex processes Holliday junction (HJ) DNA during genetic recombination and DNA repair, while the RuvA-RuvB complex plays an important role in the rescue of blocked DNA replication forks via replication fork reversal (RFR). RuvA specifically binds to HJ cruciform DNA, conferring on it an open structure. The RuvB hexamer acts as an ATP-dependent pump, pulling dsDNA into and through the RuvAB complex. HJ branch migration allows RuvC to scan DNA until it finds its consensus sequence, where it cleaves and resolves the cruciform DNA. This chain is Holliday junction branch migration complex subunit RuvA, found in Macrococcus caseolyticus (strain JCSC5402) (Macrococcoides caseolyticum).